Here is a 582-residue protein sequence, read N- to C-terminus: Type I secretion system ATP-binding protein PrsD (582 aa).

Helical transmembrane passes span 22 to 42 (FIGV…GSFF), 59 to 79 (LIAL…FELI), and 148 to 168 (IAIC…GGLI). The ABC transmembrane type-1 domain maps to 22–301 (FIGVGVASAL…AIGNWRGLVA (280 aa)). Positions 332–568 (LTVEGLASGP…VLRPQQVERQ (237 aa)) constitute an ABC transporter domain. 366–373 (GPSASGKS) serves as a coordination point for ATP.

This sequence belongs to the ABC transporter superfamily. In terms of assembly, part of a type I secretion system composed of PrsD and PrsE.

Its subcellular location is the cell inner membrane. Functionally, mediates secretion of glycanase ExsH. The polypeptide is Type I secretion system ATP-binding protein PrsD (prsD) (Rhizobium meliloti (strain 1021) (Ensifer meliloti)).